The sequence spans 67 residues: Disintegrin EC3A (67 aa).

Residues 1 to 65 (NSVHPCCDPV…DCPRNRYKGK (65 aa)) form the Disintegrin domain. Cystine bridges form between Cys-6/Cys-29, Cys-20/Cys-26, Cys-25/Cys-50, and Cys-38/Cys-57. The Cell attachment site; atypical (VGD) signature appears at 42–44 (VGD).

The protein belongs to the venom metalloproteinase (M12B) family. P-II subfamily. P-IIe sub-subfamily. In terms of assembly, heterodimer with EC3B; disulfide-linked. In terms of tissue distribution, expressed by the venom gland.

Its subcellular location is the secreted. Functionally, inhibits adhesion of cells expressing alpha-4/beta-1 (ITGA4/ITGB1) and alpha-4/beta-7 (ITGA4/ITGB7) integrins to the natural ligands vascular cell adhesion molecule 1 (VCAM-1) and mucosal addressin cell adhesion molecule 1 (MADCAM-1). It is also a weaker inhibitor of alpha-5/beta-1 (ITGA5/ITGB1) and alpha-2b/beta-3 (ITGA2B/ITGB3) integrins. The inhibitory activity of EC3 towards alpha-4 integrins is associated with the MLD sequence of EC3B subunit. The ability of EC3 to inhibit ITGA5/ITGB1 resides in both subunits A and B. This is Disintegrin EC3A from Echis carinatus (Saw-scaled viper).